Reading from the N-terminus, the 102-residue chain is Large ribosomal subunit protein bL21 (102 aa).

This sequence belongs to the bacterial ribosomal protein bL21 family. As to quaternary structure, part of the 50S ribosomal subunit. Contacts protein L20.

This protein binds to 23S rRNA in the presence of protein L20. In Geotalea daltonii (strain DSM 22248 / JCM 15807 / FRC-32) (Geobacter daltonii), this protein is Large ribosomal subunit protein bL21.